Here is a 91-residue protein sequence, read N- to C-terminus: Dynein light chain 1, cytoplasmic (91 aa).

It belongs to the dynein light chain family. In terms of assembly, homodimer. Cytoplasmic dynein consists of two catalytic heavy chains (HCs) and a number of non-catalytic subunits which present intermediate chains (ICs), light intermediate chains (LICs) and light chains (LCs). Component of the nuclear pore complex (NPC). NPC constitutes the exclusive means of nucleocytoplasmic transport. NPCs allow the passive diffusion of ions and small molecules and the active, nuclear transport receptor-mediated bidirectional transport of macromolecules such as proteins, RNAs, ribonucleoparticles (RNPs), and ribosomal subunits across the nuclear envelope. Due to its 8-fold rotational symmetry, all subunits are present with 8 copies or multiples thereof.

The protein resides in the cytoplasm. It localises to the cytoskeleton. The protein localises to the nucleus. It is found in the nuclear pore complex. Functionally, acts as one of several non-catalytic accessory components of the cytoplasmic dynein complex that are thought to be involved in linking dynein to cargos and to adapter proteins that regulate dynein function. Cytoplasmic dynein 1 acts as a motor for the intracellular retrograde motility of vesicles and organelles along microtubules. May play a role in changing or maintaining the spatial distribution of cytoskeletal structures. Also a component of the nuclear pore complex. The chain is Dynein light chain 1, cytoplasmic (DYN2) from Debaryomyces hansenii (strain ATCC 36239 / CBS 767 / BCRC 21394 / JCM 1990 / NBRC 0083 / IGC 2968) (Yeast).